A 404-amino-acid chain; its full sequence is F-box only protein 12 (404 aa).

One can recognise an F-box domain in the interval 1–44; the sequence is MKNSIPIDLIYEILSRLPAKSVARCRCVSKRWRSILRHQVFTEL. The helical transmembrane segment at 383-403 threads the bilayer; that stretch reads LAILFCLFFLLFNYLIRLCWV.

The protein localises to the membrane. The polypeptide is F-box only protein 12 (FBX12) (Arabidopsis thaliana (Mouse-ear cress)).